The sequence spans 469 residues: Transcriptional coactivator YAP1 (469 aa).

A compositionally biased stretch (pro residues) spans 1–21 (MEPAQQPPPQPAPQGPAPPSV). Residues 1–47 (MEPAQQPPPQPAPQGPAPPSVSPAGTPAAPPAPPAGHQVVHVRGDSE) are disordered. At S46 the chain carries Phosphoserine. T48 is modified (phosphothreonine). Residues 71–85 (MRLRKLPDSFFKPPE) are a coiled coil. N6-lactoyllysine is present on K75. A disordered region spans residues 76 to 99 (LPDSFFKPPEPKSHSRQASTDAGT). Phosphoserine occurs at positions 90 and 94. 2 positions are modified to phosphothreonine: T95 and T104. Position 112 is a phosphoserine; by LATS1 and LATS2 (S112). Phosphoserine is present on residues S113 and S116. Phosphothreonine; by MAPK8 and MAPK9 is present on T136. Phosphoserine; by LATS1 and LATS2 is present on S146. 2 consecutive WW domains span residues 153–186 (VPLP…DPRK) and 212–245 (GPLP…DPRL). The tract at residues 258–290 (SAPVKQPPPLAPQSPQGGVLGGGSSNQQQQIQL) is disordered. S271 and S320 each carry phosphoserine. Residues 273 to 469 (QGGVLGGGSS…LDKESFLTWL (197 aa)) are transactivation domain. The stretch at 280 to 325 (GSSNQQQQIQLQQLQMEKERLRLKQQELFRQELALRSQLPSLEQDG) forms a coiled coil. Phosphoserine; by MAPK8 and MAPK9 is present on S333. The span at 345–357 (TNSSDPFLNSGTY) shows a compositional bias: polar residues. The segment at 345-405 (TNSSDPFLNS…SQSTLPSQQS (61 aa)) is disordered. Phosphoserine is present on residues S347, S348, and S354. S363 is subject to Phosphoserine; by LATS1 and LATS2. Positions 365–375 (DSGLSMSSYSI) are enriched in polar residues. 2 positions are modified to phosphoserine; by CK1: S366 and S369. Y373 bears the Phosphotyrosine; by ABL1 mark. Residue T378 is modified to Phosphothreonine; by MAPK8 and MAPK9. A compositionally biased stretch (polar residues) spans 393-405 (DTISQSTLPSQQS).

The protein belongs to the YAP1 family. Part of a complex when phosphorylated that contains DSG3, PKP1, YAP1 and YWHAG; the complex is required for localization of DSG3 and YAP1 to the cell membrane in keratinocytes. Binds to the SH3 domain of the YES kinase. Binds to WBP1 and WBP2. Binds, in vitro, through the WW1 domain, to neural isoforms of ENAH that contain the PPSY motif. The phosphorylated form interacts with YWHAB. Interacts (via WW domains) with LATS1 (via PPxY motif 2). Interacts with LATS2. Interacts (via WW domain 1) with ERBB4 (via PPxY motif 2). Interacts with TEAD1, TEAD2, TEAD3 and TEAD4. Interacts with TP73. Interacts with RUNX1. Interacts with HCK. Interacts (via WW domains) with PTPN14 (via PPxY motif 2); this interaction leads to the cytoplasmic sequestration of YAP1 and inhibits its transcriptional coactivator activity. Interacts (when phosphorylated at Ser-112) with SMAD2, SMAD3 and WWTR1. Interacts with PRRG2 (via cytoplasmic domain). Interacts (via WW domains) with PRRG4 (via cytoplasmic domain). Interacts (phosphorylated) with CLDN18; the interaction sequesters YAP1 away from the nucleus and thereby restricts transcription of YAP1 target genes. Interacts with SMAD1. Interacts with AMOT; the interaction facilitates translocation of YAP1 to the cytoplasm and tight junctions. Interacts with AMOTL2, the interaction is required for ubiquitination of AMOTL2 and localization of YAP1 to tight junctions. Phosphorylated by LATS1 and LATS2; leading to cytoplasmic translocation and inactivation. Phosphorylated by ABL1; leading to YAP1 stabilization, enhanced interaction with TP73 and recruitment onto proapoptotic genes; in response to DNA damage. Phosphorylation at Ser-366 and Ser-369 by CK1 is triggered by previous phosphorylation at Ser-363 by LATS proteins and leads to YAP1 ubiquitination by SCF(beta-TRCP) E3 ubiquitin ligase and subsequent degradation. Phosphorylated at Thr-104, Thr-136, Ser-333 and Thr-378 by MAPK8/JNK1 and MAPK9/JNK2, which is required for the regulation of apoptosis by YAP1. In terms of processing, lactylation by AARS1 promotes nuclear localization and stabilization of YAP1, leading to increased Hippo signaling pathway. Delactylated by SIRT1. Post-translationally, ubiquitinated by SCF(beta-TRCP) E3 ubiquitin ligase. Highly specific to cortical neurons.

It localises to the cytoplasm. It is found in the nucleus. Its subcellular location is the cell junction. The protein resides in the tight junction. The protein localises to the cell membrane. Functionally, transcriptional regulator with dual roles as a coactivator and corepressor. Critical downstream regulatory target in the Hippo signaling pathway, crucial for organ size control and tumor suppression by restricting proliferation and promoting apoptosis. The Hippo signaling pathway core involves a kinase cascade featuring STK3/MST2 and STK4/MST1, along with its regulatory partner SAV1, which phosphorylates and activates LATS1/2 in complex with their regulatory protein, MOB1. This activation leads to the phosphorylation and inactivation of the YAP1 oncoprotein and WWTR1/TAZ. Phosphorylation of YAP1 by LATS1/2 prevents its nuclear translocation, thereby regulating the expression of its target genes. The transcriptional regulation of gene expression requires TEAD transcription factors and modulates cell growth, anchorage-independent growth, and induction of epithelial-mesenchymal transition (EMT). Plays a key role in tissue tension and 3D tissue shape by regulating the cortical actomyosin network, acting via ARHGAP18, a Rho GTPase activating protein that suppresses F-actin polymerization. It also suppresses ciliogenesis by acting as a transcriptional corepressor of TEAD4 target genes AURKA and PLK1. In conjunction with WWTR1, regulates TGFB1-dependent SMAD2 and SMAD3 nuclear accumulation. Synergizes with WBP2 to enhance PGR activity. Its function is as follows. Attenuates p73-mediated cell death signaling in transcriptional repression-induced atypical death (TRIAD) of neurons. The chain is Transcriptional coactivator YAP1 (Yap1) from Rattus norvegicus (Rat).